The primary structure comprises 184 residues: Peptide deformylase (184 aa).

Residues Cys-111 and His-154 each coordinate Fe cation. Glu-155 is a catalytic residue. His-158 is a binding site for Fe cation.

It belongs to the polypeptide deformylase family. Requires Fe(2+) as cofactor.

The catalysed reaction is N-terminal N-formyl-L-methionyl-[peptide] + H2O = N-terminal L-methionyl-[peptide] + formate. In terms of biological role, removes the formyl group from the N-terminal Met of newly synthesized proteins. Requires at least a dipeptide for an efficient rate of reaction. N-terminal L-methionine is a prerequisite for activity but the enzyme has broad specificity at other positions. The polypeptide is Peptide deformylase (Pediococcus pentosaceus (strain ATCC 25745 / CCUG 21536 / LMG 10740 / 183-1w)).